The chain runs to 739 residues: MRLLPLLVGFSTLLNCSYTQNCSKTTCLPNAKCEVHNGVEACFCSQGYSGNGVTICEDIDECSESSVCGDHAVCENVNGGFSCFCREGYQTATGKSQFTPNDGSYCQDIDECSESSVCGDHAVCENVNGGFSCFCREGYQTATGKSQFTPNDGSYCQESMNSNCHLEHACIAANINKTLKRIGPITEQTTLLQEIYRNSEAELSLMDIVTYIEILTESSSLLGHPNSTTSYKDAHFNSTLTEFGETINNFVERSTHKMWDQLPTNHRRLHLTKLMHTAELVTLQIAQNTQKNSQFDMNSTDLALKVFAFDSTHMKHAHPHMNVDGGYVKISPRRKAAHGTTGNVVVAFLCYKSIGPLLSSSDNFLLDTQNDNSEGKEKVISSVISASISSNPPTLYELEKITFTLSHVKLSDKHRTQCAFWNYSVDAMNNGSWSTEGCELTHSNDTHTSCRCSHLTHFAILMSSTSSIGIKDYNILTRITQLGIIISLICLAICIFTFWFFSEIQSTRTTIHKNLCCSLFLAELVFLIGININTNKLVCSIIAGLLHYFFLAAFAWMCIEGIHLYLIVVGVIYNKGFLHKNFYIFGYLSPAVVVGFSASLGYRYYGTTKVCWLSTENNFIWSFIGPACLIILVNLLAFGVIIYKVFRHTAGLKPEVSCYENIRSCARGALALLFLLGTTWIFGVLHVVHASVVTAYLFTVSNAFQGMFIFLFLCVLSRKIQEEYYRLFKNVPCCFGCLR.

The N-terminal stretch at 1-19 (MRLLPLLVGFSTLLNCSYT) is a signal peptide. Residues 20–57 (QNCSKTTCLPNAKCEVHNGVEACFCSQGYSGNGVTICE) form the EGF-like 1 domain. Residues 20–481 (QNCSKTTCLP…DYNILTRITQ (462 aa)) are Extracellular-facing. N21 carries an N-linked (GlcNAc...) asparagine glycan. 9 cysteine pairs are disulfide-bonded: C22-C33, C27-C42, C44-C56, C62-C74, C68-C83, C85-C106, C112-C124, C118-C133, and C135-C156. One can recognise an EGF-like 2; calcium-binding domain in the interval 58–107 (DIDECSESSVCGDHAVCENVNGGFSCFCREGYQTATGKSQFTPNDGSYCQ). An EGF-like 3; calcium-binding domain is found at 108–157 (DIDECSESSVCGDHAVCENVNGGFSCFCREGYQTATGKSQFTPNDGSYCQ). Residues N176, N226, N237, N298, N422, N430, and N444 are each glycosylated (N-linked (GlcNAc...) asparagine). The GAIN-B domain occupies 293–468 (SQFDMNSTDL…AILMSSTSSI (176 aa)). 2 cysteine pairs are disulfide-bonded: C418-C450 and C438-C452. Residues 418 to 468 (CAFWNYSVDAMNNGSWSTEGCELTHSNDTHTSCRCSHLTHFAILMSSTSSI) form a GPS region. A helical membrane pass occupies residues 482–502 (LGIIISLICLAICIFTFWFFS). At 503-513 (EIQSTRTTIHK) the chain is on the cytoplasmic side. Residues 514–534 (NLCCSLFLAELVFLIGININT) traverse the membrane as a helical segment. Residues 535 to 548 (NKLVCSIIAGLLHY) lie on the Extracellular side of the membrane. The chain crosses the membrane as a helical span at residues 549–569 (FFLAAFAWMCIEGIHLYLIVV). Residues 570-581 (GVIYNKGFLHKN) lie on the Cytoplasmic side of the membrane. The chain crosses the membrane as a helical span at residues 582–602 (FYIFGYLSPAVVVGFSASLGY). The Extracellular portion of the chain corresponds to 603–622 (RYYGTTKVCWLSTENNFIWS). Residues 623 to 643 (FIGPACLIILVNLLAFGVIIY) form a helical membrane-spanning segment. The Cytoplasmic segment spans residues 644 to 667 (KVFRHTAGLKPEVSCYENIRSCAR). A helical transmembrane segment spans residues 668-688 (GALALLFLLGTTWIFGVLHVV). The Extracellular portion of the chain corresponds to 689–695 (HASVVTA). Residues 696 to 716 (YLFTVSNAFQGMFIFLFLCVL) form a helical membrane-spanning segment. The Cytoplasmic segment spans residues 717-739 (SRKIQEEYYRLFKNVPCCFGCLR).

It belongs to the G-protein coupled receptor 2 family. Adhesion G-protein coupled receptor (ADGR) subfamily. As to quaternary structure, heterodimer of 2 chains generated by proteolytic processing; the large extracellular N-terminal fragment and the membrane-bound C-terminal fragment predominantly remain associated and non-covalently linked. Glycosylated. Post-translationally, proteolytically cleaved into 2 subunits, an extracellular alpha subunit and a seven-transmembrane subunit.

Its subcellular location is the cell membrane. Its function is as follows. Endothelial orphan receptor that acts as a key regulator of angiogenesis. The chain is Adhesion G protein-coupled receptor L4 (Adgrl4) from Mus musculus (Mouse).